The following is a 249-amino-acid chain: Zinc finger protein mnm-2 (249 aa).

Residues 20-65 are disordered; the sequence is PKEELETEEEDEEEDEEEELSSSEVTSENDMETESASSSASSVGQP. Over residues 24-52 the composition is skewed to acidic residues; the sequence is LETEEEDEEEDEEEELSSSEVTSENDMET. 3 consecutive C2H2-type zinc fingers follow at residues 168–190, 196–218, and 224–246; these read YRCD…KRIH, FKCE…RLTH, and YVCG…MRTH.

In larva and adult, expressed in the M3 pharyngeal motor neurons, extrapharyngeal neurons in the head, the PQR tail neurons, rectal cells, vulva cells, the spermetheca-uterine valve, body wall muscle cells and neurons of the ventral nerve cord. In the embryo, expressed in pharyngeal cells, extrapharyngeal head neurons and within the tail. Expressed in body wall muscle cells during late embryonic stages. Expressed in the mother cells of the M2 and M3 pharyngeal motor neurons precursor cells at the embryonic bean stage and subsequently in the M2 and M3 cells as they are born. Expression is sustained only in the two M3 cells up to at least the 5-day-old adult. In contrast, expression gradually declines in the M2 cells beginning from the time of their birth, and is completely undetectable by the time of hatching.

The protein localises to the nucleus. Its function is as follows. Required in the M3 pharyngeal motor neuron to guide the growth cone of the sister M2 motor neuron during axon development. This chain is Zinc finger protein mnm-2, found in Caenorhabditis elegans.